We begin with the raw amino-acid sequence, 683 residues long: Long-chain-fatty-acid--CoA ligase 5 (683 aa).

A helical; Signal-anchor for type III membrane protein membrane pass occupies residues 12–32 (LPTPALICLLTFGTAIFLWLI). Over 33-683 (NRPQPVLPLI…IKSLYESIEE (651 aa)) the chain is Cytoplasmic. An N6-acetyllysine modification is found at lysine 361.

This sequence belongs to the ATP-dependent AMP-binding enzyme family. Expressed most abundantly in the small intestine, and to a much lesser extent in the lung, liver, adrenal gland, adipose tissue and kidney.

It localises to the mitochondrion. It is found in the endoplasmic reticulum. Its subcellular location is the mitochondrion outer membrane. The protein localises to the endoplasmic reticulum membrane. The protein resides in the cell membrane. It carries out the reaction a long-chain fatty acid + ATP + CoA = a long-chain fatty acyl-CoA + AMP + diphosphate. The catalysed reaction is (5Z,8Z,11Z,14Z)-eicosatetraenoate + ATP + CoA = (5Z,8Z,11Z,14Z)-eicosatetraenoyl-CoA + AMP + diphosphate. It catalyses the reaction 15-hydroxy-(5Z,8Z,11Z,13E)-eicosatetraenoate + ATP + CoA = 15-hydroxy-(5Z,8Z,11Z,13E)-eicosatetraenoyl-CoA + AMP + diphosphate. The enzyme catalyses 12-hydroxy-(5Z,8Z,10E,14Z)-eicosatetraenoate + ATP + CoA = 12-hydroxy-(5Z,8Z,10E,14Z)-eicosatetraenoyl-CoA + AMP + diphosphate. It carries out the reaction 5-hydroxy-(6E,8Z,11Z,14Z)-eicosatetraenoate + ATP + CoA = 5-hydroxy-(6E,8Z,11Z,14Z)-eicosatetraenoyl-CoA + AMP + diphosphate. The catalysed reaction is 14,15-epoxy-(5Z,8Z,11Z)-eicosatrienoate + ATP + CoA = 14,15-epoxy-(5Z,8Z,11Z)-eicosatrienoyl-CoA + AMP + diphosphate. It catalyses the reaction 11,12-epoxy-(5Z,8Z,14Z)-eicosatrienoate + ATP + CoA = 11,12-epoxy-(5Z,8Z,14Z)-eicosatrienoyl-CoA + AMP + diphosphate. The enzyme catalyses hexadecanoate + ATP + CoA = hexadecanoyl-CoA + AMP + diphosphate. It carries out the reaction (E)-hexadec-2-enoate + ATP + CoA = (2E)-hexadecenoyl-CoA + AMP + diphosphate. The catalysed reaction is (9Z)-octadecenoate + ATP + CoA = (9Z)-octadecenoyl-CoA + AMP + diphosphate. In terms of biological role, catalyzes the conversion of long-chain fatty acids to their active form acyl-CoAs for both synthesis of cellular lipids, and degradation via beta-oxidation. ACSL5 may sensitize epithelial cells to apoptosis specifically triggered by the death ligand TRAIL at the villus tip of the crypt-villus axis of the small intestine. May have a role in the survival of glioma cells. May activate fatty acids from exogenous sources for the synthesis of triacylglycerol destined for intracellular storage. It was suggested that it may also stimulate fatty acid oxidation. Utilizes a wide range of saturated fatty acids with a preference for C16-C18 unsaturated fatty acids. The polypeptide is Long-chain-fatty-acid--CoA ligase 5 (Rattus norvegicus (Rat)).